Reading from the N-terminus, the 156-residue chain is Ribosomal RNA large subunit methyltransferase H (156 aa).

S-adenosyl-L-methionine is bound by residues leucine 73, glycine 104, and 123-128 (LSSLTL).

The protein belongs to the RNA methyltransferase RlmH family. In terms of assembly, homodimer.

It is found in the cytoplasm. The catalysed reaction is pseudouridine(1915) in 23S rRNA + S-adenosyl-L-methionine = N(3)-methylpseudouridine(1915) in 23S rRNA + S-adenosyl-L-homocysteine + H(+). Its function is as follows. Specifically methylates the pseudouridine at position 1915 (m3Psi1915) in 23S rRNA. The sequence is that of Ribosomal RNA large subunit methyltransferase H from Neisseria gonorrhoeae (strain ATCC 700825 / FA 1090).